The chain runs to 113 residues: U11-theraphotoxin-Hhn1u (113 aa).

Residues 1–21 (MNTVRVTFLLVFVLAVSLGQA) form the signal peptide. Residues 22–74 (DKDENRMEMQEKTEQGKSYLDFAENLLLQKLEELEAKLLEEDSEESRNSRQKR) constitute a propeptide that is removed on maturation. 3 disulfides stabilise this stretch: Cys-75/Cys-90, Cys-82/Cys-95, and Cys-89/Cys-110.

The protein belongs to the neurotoxin 14 (magi-1) family. 01 (HNTX-16) subfamily. As to expression, expressed by the venom gland.

The protein localises to the secreted. In terms of biological role, probable ion channel inhibitor. This chain is U11-theraphotoxin-Hhn1u, found in Cyriopagopus hainanus (Chinese bird spider).